Here is an 837-residue protein sequence, read N- to C-terminus: MSQTGSHPGRGLAGRWLWGAQPCLLLPIVPLSWLVWLLLLLLASLLPSARLASPLPREEEIVFPEKLNGSVLPGSGAPARLLCRLQAFGETLLLELEQDSGVQVEGLTVQYLGQAPELLGGAEPGTYLTGTINGDPESVASLHWDGGALLGVLQYRGAELHLQPLEGGTPNSAGGPGAHILRRKSPASGQGPMCNVKAPLGSPSPRPRRAKRFASLSRFVETLVVADDKMAAFHGAGLKRYLLTVMAAAAKAFKHPSIRNPVSLVVTRLVILGSGEEGPQVGPSAAQTLRSFCAWQRGLNTPEDSDPDHFDTAILFTRQDLCGVSTCDTLGMADVGTVCDPARSCAIVEDDGLQSAFTAAHELGHVFNMLHDNSKPCISLNGPLSTSRHVMAPVMAHVDPEEPWSPCSARFITDFLDNGYGHCLLDKPEAPLHLPVTFPGKDYDADRQCQLTFGPDSRHCPQLPPPCAALWCSGHLNGHAMCQTKHSPWADGTPCGPAQACMGGRCLHMDQLQDFNIPQAGGWGPWGPWGDCSRTCGGGVQFSSRDCTRPVPRNGGKYCEGRRTRFRSCNTEDCPTGSALTFREEQCAAYNHRTDLFKSFPGPMDWVPRYTGVAPQDQCKLTCQAQALGYYYVLEPRVVDGTPCSPDSSSVCVQGRCIHAGCDRIIGSKKKFDKCMVCGGDGSGCSKQSGSFRKFRYGYNNVVTIPAGATHILVRQQGNPGHRSIYLALKLPDGSYALNGEYTLMPSPTDVVLPGAVSLRYSGATAASETLSGHGPLAQPLTLQVLVAGNPQDTRLRYSFFVPRPTPSTPRPTPQDWLHRRAQILEILRRRPWAGRK.

Positions 1-51 are cleaved as a signal peptide; that stretch reads MSQTGSHPGRGLAGRWLWGAQPCLLLPIVPLSWLVWLLLLLLASLLPSARL. A propeptide spanning residues 52-212 is cleaved from the precursor; it reads ASPLPREEEI…PSPRPRRAKR (161 aa). A glycan (N-linked (GlcNAc...) asparagine) is linked at Asn68. A Cysteine switch motif is present at residues 192-199; that stretch reads PMCNVKAP. A Zn(2+)-binding site is contributed by Cys194. One can recognise a Peptidase M12B domain in the interval 218-428; it reads RFVETLVVAD…GYGHCLLDKP (211 aa). 11 disulfides stabilise this stretch: Cys293-Cys345, Cys322-Cys327, Cys339-Cys423, Cys377-Cys407, Cys449-Cys472, Cys460-Cys482, Cys467-Cys501, Cys495-Cys506, Cys532-Cys569, Cys536-Cys574, and Cys547-Cys559. His361 is a Zn(2+) binding site. The active site involves Glu362. Zn(2+) contacts are provided by His365 and His371. Residues 437-519 form the Disintegrin domain; it reads TFPGKDYDAD…DQLQDFNIPQ (83 aa). The region spanning 520 to 575 is the TSP type-1 domain; it reads AGGWGPWGPWGDCSRTCGGGVQFSSRDCTRPVPRNGGKYCEGRRTRFRSCNTEDCP. The interval 686-837 is spacer; sequence SKQSGSFRKF…LRRRPWAGRK (152 aa).

Interacts with SRPX2. Zn(2+) is required as a cofactor. In terms of processing, the precursor is cleaved by a furin endopeptidase. Glycosylated. Can be O-fucosylated by POFUT2 on a serine or a threonine residue found within the consensus sequence C1-X(2)-(S/T)-C2-G of the TSP type-1 repeat domains where C1 and C2 are the first and second cysteine residue of the repeat, respectively. Fucosylated repeats can then be further glycosylated by the addition of a beta-1,3-glucose residue by the glucosyltransferase, B3GALTL. Fucosylation mediates the efficient secretion of ADAMTS family members. Can also be C-glycosylated with one or two mannose molecules on tryptophan residues within the consensus sequence W-X-X-W of the TPRs, and N-glycosylated. These other glycosylations can also facilitate secretion. As to expression, expressed in brain, lung and heart. Expressed at very low level in placenta and skeletal muscles. Isoform 2: Detected in osteoarthritic synovium.

Its subcellular location is the secreted. The protein localises to the extracellular space. It localises to the extracellular matrix. The enzyme catalyses Glutamyl endopeptidase. Bonds cleaved include 370-Thr-Glu-Gly-Glu-|-Ala-Arg-Gly-Ser-377 in the interglobular domain of mammalian aggrecan.. Its function is as follows. Cleaves aggrecan, a cartilage proteoglycan, at the '392-Glu-|-Ala-393' site and may be involved in its turnover. Also cleaves COMP. May play an important role in the destruction of aggrecan in arthritic diseases. Could be a critical factor in the exacerbation of neurodegeneration in Alzheimer disease. In Homo sapiens (Human), this protein is A disintegrin and metalloproteinase with thrombospondin motifs 4 (ADAMTS4).